The primary structure comprises 815 residues: Neuronal PAS domain-containing protein 2 (815 aa).

Over residues 1–10 (MDEDEKDRAK) the composition is skewed to basic and acidic residues. The segment at 1 to 21 (MDEDEKDRAKRASRNKSEKKR) is disordered. The tract at residues 1 to 61 (MDEDEKDRAK…VIGFLQKHNE (61 aa)) is sufficient for heterodimer formation with BMAL1, E-box binding and for the effect of NADPH. One can recognise a bHLH domain in the interval 9 to 59 (AKRASRNKSEKKRRDQFNVLIKELSSMLPGNTRKMDKTTVLEKVIGFLQKH). In terms of domain architecture, PAS 1 spans 82 to 152 (NEEFTQLMLE…KMLSSCMLMT (71 aa)). Residues His119 and His171 each coordinate heme b. A PAS 2 domain is found at 237–307 (FLKEMCIVEE…RCHEHLMQFG (71 aa)). A PAC domain is found at 311–354 (SCCYRFLTKGQQWIWLQTHYYITYHQWNSKPEFIVCTHMVVSYA). Residues 405 to 420 (RTPSVSSRSSPKSSHT) show a composition bias toward low complexity. 3 disordered regions span residues 405–467 (RTPS…SLPS), 584–656 (PGQI…AAGC), and 728–815 (FATT…QPLR). Polar residues-rich tracts occupy residues 425–462 (PASTPTKLTAEASTPLQRTSSTQQDLSAHRLSQPTALQ), 588–608 (ASPQTPSQQVLREASVISSQG), and 616–630 (ELTTGSSRPTRSTAT). Composition is skewed to low complexity over residues 633 to 655 (GPSTSLSRRGPGPSSGPGASAAG) and 732 to 752 (PPSQSSSLPPMQLQHQQHQQQ). Over residues 753–786 (RYLQVQTPSSLHNEQTDSLLLSSYSPQQGNMGYH) the composition is skewed to polar residues. Positions 787 to 815 (QTQQQQQQQQLPRRSNSLSESSNLPQPLR) are enriched in low complexity.

As to quaternary structure, component of the circadian clock oscillator which includes the CRY proteins, CLOCK or NPAS2, BMAL1 or BMAL2, CSNK1D and/or CSNK1E, TIMELESS and the PER proteins. Efficient DNA binding requires dimerization with another bHLH protein. Forms a heterodimer with BMAL1 and this heterodimerization is required for E-box-dependent transactivation. The cofactor is heme. In terms of tissue distribution, expressed in the retinal photoreceptor cells (at protein level). Expressed in the pineal gland and retina.

It localises to the nucleus. Its activity is regulated as follows. Carbon monoxide (CO) and the redox state of the cell can modulate the transcriptional activity of the NPAS2-BMAL1 heterodimer. NADH and NADPH enhance the DNA-binding activity of the heterodimer whereas CO binds the heme group in NPAS2 and inhibits the DNA-binding activity of the heterodimer. Transcriptional activator which forms a core component of the circadian clock. The circadian clock, an internal time-keeping system, regulates various physiological processes through the generation of approximately 24 hour circadian rhythms in gene expression, which are translated into rhythms in metabolism and behavior. It is derived from the Latin roots 'circa' (about) and 'diem' (day) and acts as an important regulator of a wide array of physiological functions including metabolism, sleep, body temperature, blood pressure, endocrine, immune, cardiovascular, and renal function. Consists of two major components: the central clock, residing in the suprachiasmatic nucleus (SCN) of the brain, and the peripheral clocks that are present in nearly every tissue and organ system. Both the central and peripheral clocks can be reset by environmental cues, also known as Zeitgebers (German for 'timegivers'). The predominant Zeitgeber for the central clock is light, which is sensed by retina and signals directly to the SCN. The central clock entrains the peripheral clocks through neuronal and hormonal signals, body temperature and feeding-related cues, aligning all clocks with the external light/dark cycle. Circadian rhythms allow an organism to achieve temporal homeostasis with its environment at the molecular level by regulating gene expression to create a peak of protein expression once every 24 hours to control when a particular physiological process is most active with respect to the solar day. Transcription and translation of core clock components (CLOCK, NPAS2, BMAL1, BMAL2, PER1, PER2, PER3, CRY1 and CRY2) plays a critical role in rhythm generation, whereas delays imposed by post-translational modifications (PTMs) are important for determining the period (tau) of the rhythms (tau refers to the period of a rhythm and is the length, in time, of one complete cycle). A diurnal rhythm is synchronized with the day/night cycle, while the ultradian and infradian rhythms have a period shorter and longer than 24 hours, respectively. Disruptions in the circadian rhythms contribute to the pathology of cardiovascular diseases, cancer, metabolic syndromes and aging. A transcription/translation feedback loop (TTFL) forms the core of the molecular circadian clock mechanism. Transcription factors, CLOCK or NPAS2 and BMAL1 or BMAL2, form the positive limb of the feedback loop, act in the form of a heterodimer and activate the transcription of core clock genes and clock-controlled genes (involved in key metabolic processes), harboring E-box elements (5'-CACGTG-3') within their promoters. The core clock genes: PER1/2/3 and CRY1/2 which are transcriptional repressors form the negative limb of the feedback loop and interact with the CLOCK|NPAS2-BMAL1|BMAL2 heterodimer inhibiting its activity and thereby negatively regulating their own expression. This heterodimer also activates nuclear receptors NR1D1/2 and RORA/B/G, which form a second feedback loop and which activate and repress BMAL1 transcription, respectively. NPAS2 positively regulates the circadian expression of AANAT in the retinal photoreceptor cells. The sequence is that of Neuronal PAS domain-containing protein 2 (NPAS2) from Gallus gallus (Chicken).